We begin with the raw amino-acid sequence, 30 residues long: Dendrotoxin B (30 aa).

An intrachain disulfide couples Cys3 to Cys22.

The protein belongs to the three-finger toxin family. Short-chain subfamily. Orphan group XI sub-subfamily. In terms of processing, contains 4 disulfide bonds. In terms of tissue distribution, expressed by the venom gland.

The protein resides in the secreted. Functionally, blocks voltage-gated potassium channels (Kv). This is the slowly inactivating phase of potassium efflux which is blocked by this toxin. This Dendroaspis angusticeps (Eastern green mamba) protein is Dendrotoxin B.